Reading from the N-terminus, the 271-residue chain is Cyclic AMP-dependent transcription factor ATF-1 (271 aa).

Positions 1-61 (MEDSHKSTTS…QKAHGILARR (61 aa)) are disordered. Residues 31–90 (QVSSLSESEESQDSSDSIGSSQKAHGILARRPSYRKILKDLSSEDTRGRKGDGENSGVSA) enclose the KID domain. Serine 63 carries the post-translational modification Phosphoserine; by CaMK1, CDK3, RPS6KA4 and RPS6KA5. A Phosphoserine; by HIPK2 modification is found at serine 198. Residues lysine 208 and lysine 215 each participate in a glycyl lysine isopeptide (Lys-Gly) (interchain with G-Cter in SUMO2) cross-link. The bZIP domain occupies 213 to 271 (QLKREIRLMKNREAARECRRKKKEYVKCLENRVAVLENQNKTLIEELKTLKDLYSNKSV). The basic motif stretch occupies residues 215 to 239 (KREIRLMKNREAARECRRKKKEYVK). Positions 241–262 (LENRVAVLENQNKTLIEELKTL) are leucine-zipper.

The protein belongs to the bZIP family. ATF subfamily. As to quaternary structure, binds DNA as a dimer. Interacts with HIPK2 and CDK3. Interacts with MOTS-c, a peptide produced by the mitochondrially encoded 12S rRNA MT-RNR1; the interaction occurs in the nucleus following metabolic stress. Phosphorylated at Ser-198 by HIPK2 in response to genotoxic stress. This phosphorylation promotes transcription repression of FTH1 and other antioxidant detoxification genes. The CDK3-mediated phosphorylation at Ser-63 promotes its transactivation and transcriptional activities. Phosphorylated at Ser-63 by RPS6KA4 and RPS6KA5 in response to mitogenic or stress stimuli.

The protein localises to the nucleus. In terms of biological role, this protein binds the cAMP response element (CRE) (consensus: 5'-GTGACGT[AC][AG]-3'), a sequence present in many viral and cellular promoters. Binds to the Tax-responsive element (TRE) of HTLV-I. Mediates PKA-induced stimulation of CRE-reporter genes. Represses the expression of FTH1 and other antioxidant detoxification genes. Triggers cell proliferation and transformation. This Homo sapiens (Human) protein is Cyclic AMP-dependent transcription factor ATF-1 (ATF1).